A 105-amino-acid polypeptide reads, in one-letter code: Thiosulfate sulfurtransferase GlpE (105 aa).

The 89-residue stretch at 15 to 103 folds into the Rhodanese domain; sequence MQQGAILVDI…WCRAELPIDT (89 aa). C63 functions as the Cysteine persulfide intermediate in the catalytic mechanism.

It belongs to the GlpE family.

It is found in the cytoplasm. It carries out the reaction thiosulfate + hydrogen cyanide = thiocyanate + sulfite + 2 H(+). It catalyses the reaction thiosulfate + [thioredoxin]-dithiol = [thioredoxin]-disulfide + hydrogen sulfide + sulfite + 2 H(+). In terms of biological role, transferase that catalyzes the transfer of sulfur from thiosulfate to thiophilic acceptors such as cyanide or dithiols. May function in a CysM-independent thiosulfate assimilation pathway by catalyzing the conversion of thiosulfate to sulfite, which can then be used for L-cysteine biosynthesis. In Haemophilus influenzae (strain PittEE), this protein is Thiosulfate sulfurtransferase GlpE.